Here is a 238-residue protein sequence, read N- to C-terminus: uncharacterized protein (238 aa).

A run of 3 helical transmembrane segments spans residues 19–39 (IVIE…FQII), 79–99 (IILF…AEFI), and 141–161 (YVEI…LIKC).

It is found in the cell membrane. This is an uncharacterized protein from Methanocaldococcus jannaschii (strain ATCC 43067 / DSM 2661 / JAL-1 / JCM 10045 / NBRC 100440) (Methanococcus jannaschii).